The following is a 130-amino-acid chain: Small ribosomal subunit protein uS9 (130 aa).

The protein belongs to the universal ribosomal protein uS9 family.

In Burkholderia cenocepacia (strain HI2424), this protein is Small ribosomal subunit protein uS9.